We begin with the raw amino-acid sequence, 231 residues long: Ribose-5-phosphate isomerase A (231 aa).

Substrate contacts are provided by residues 32 to 35 (TGST), 85 to 88 (DGAD), and 98 to 101 (KGGG). Residue Glu-107 is the Proton acceptor of the active site. Lys-125 serves as a coordination point for substrate.

Belongs to the ribose 5-phosphate isomerase family. In terms of assembly, homodimer.

It carries out the reaction aldehydo-D-ribose 5-phosphate = D-ribulose 5-phosphate. It participates in carbohydrate degradation; pentose phosphate pathway; D-ribose 5-phosphate from D-ribulose 5-phosphate (non-oxidative stage): step 1/1. Functionally, catalyzes the reversible conversion of ribose-5-phosphate to ribulose 5-phosphate. This is Ribose-5-phosphate isomerase A from Burkholderia mallei (strain NCTC 10247).